Here is a 596-residue protein sequence, read N- to C-terminus: Transketolase-like protein 1 (596 aa).

A substrate-binding site is contributed by H46. Residues S49 and 94–96 (GWL) each bind thiamine diphosphate. D126 is a Mg(2+) binding site. G127 and N156 together coordinate thiamine diphosphate. N156 and L158 together coordinate Mg(2+). K218 and H232 together coordinate thiamine diphosphate. H232, R292, and S319 together coordinate substrate. 2 residues coordinate thiamine diphosphate: E340 and F366. Catalysis depends on E340, which acts as the Proton donor. Substrate-binding residues include H390 and D398. Thiamine diphosphate is bound at residue Q402. R448 is a binding site for substrate.

Belongs to the transketolase family. Homodimer. Mg(2+) serves as cofactor. Ca(2+) is required as a cofactor. It depends on Mn(2+) as a cofactor. Requires Co(2+) as cofactor. The cofactor is thiamine diphosphate.

It is found in the cytoplasm. It catalyses the reaction D-sedoheptulose 7-phosphate + D-glyceraldehyde 3-phosphate = aldehydo-D-ribose 5-phosphate + D-xylulose 5-phosphate. Its function is as follows. Catalyzes the transfer of a two-carbon ketol group from a ketose donor to an aldose acceptor, via a covalent intermediate with the cofactor thiamine pyrophosphate. In Macaca fascicularis (Crab-eating macaque), this protein is Transketolase-like protein 1 (TKTL1).